Here is a 100-residue protein sequence, read N- to C-terminus: Aspartyl/glutamyl-tRNA(Asn/Gln) amidotransferase subunit C (100 aa).

The protein belongs to the GatC family. In terms of assembly, heterotrimer of A, B and C subunits.

It carries out the reaction L-glutamyl-tRNA(Gln) + L-glutamine + ATP + H2O = L-glutaminyl-tRNA(Gln) + L-glutamate + ADP + phosphate + H(+). The catalysed reaction is L-aspartyl-tRNA(Asn) + L-glutamine + ATP + H2O = L-asparaginyl-tRNA(Asn) + L-glutamate + ADP + phosphate + 2 H(+). Functionally, allows the formation of correctly charged Asn-tRNA(Asn) or Gln-tRNA(Gln) through the transamidation of misacylated Asp-tRNA(Asn) or Glu-tRNA(Gln) in organisms which lack either or both of asparaginyl-tRNA or glutaminyl-tRNA synthetases. The reaction takes place in the presence of glutamine and ATP through an activated phospho-Asp-tRNA(Asn) or phospho-Glu-tRNA(Gln). The protein is Aspartyl/glutamyl-tRNA(Asn/Gln) amidotransferase subunit C of Streptococcus uberis (strain ATCC BAA-854 / 0140J).